The sequence spans 195 residues: Large ribosomal subunit protein bL17 (195 aa).

Residues 132-195 (ARGTRFAARK…TEAKDTKPES (64 aa)) form a disordered region. Residues 159 to 186 (PTAAAVAAEAQAEQPTAEAVAADDAATT) are compositionally biased toward low complexity.

It belongs to the bacterial ribosomal protein bL17 family. Part of the 50S ribosomal subunit. Contacts protein L32.

The protein is Large ribosomal subunit protein bL17 of Parafrankia sp. (strain EAN1pec).